A 276-amino-acid chain; its full sequence is Pantothenate synthetase (276 aa).

27 to 34 lines the ATP pocket; it reads MGALHRGH. Histidine 34 functions as the Proton donor in the catalytic mechanism. A (R)-pantoate-binding site is contributed by glutamine 58. Glutamine 58 lines the beta-alanine pocket. 147-150 is an ATP binding site; it reads GKKD. Glutamine 153 serves as a coordination point for (R)-pantoate. ATP is bound by residues alanine 176 and 184–187; that span reads LSSR.

This sequence belongs to the pantothenate synthetase family. As to quaternary structure, homodimer.

It is found in the cytoplasm. The enzyme catalyses (R)-pantoate + beta-alanine + ATP = (R)-pantothenate + AMP + diphosphate + H(+). It participates in cofactor biosynthesis; (R)-pantothenate biosynthesis; (R)-pantothenate from (R)-pantoate and beta-alanine: step 1/1. Its function is as follows. Catalyzes the condensation of pantoate with beta-alanine in an ATP-dependent reaction via a pantoyl-adenylate intermediate. The chain is Pantothenate synthetase from Helicobacter pylori (strain P12).